The following is a 171-amino-acid chain: MIGWLEAMLRVGRKLFVKAETQLYPEEKPKLFPRSRGRIVLTRDPDGQERCVACNLCAAVCPVGCIDLSKAVADDGRWYPEHFRINFARCIFCGFCEEACPTAAIQLTPDFELGEWRRDALVYEKHDLLIAGEGKVRGYRYWSVAGKAIDGKDKGCAENESPPVDLKGLLP.

4Fe-4S ferredoxin-type domains lie at I39–A71 and E81–D110. [4Fe-4S] cluster is bound by residues C51, C54, C57, C61, C90, C93, C96, and C100.

The protein belongs to the complex I 23 kDa subunit family. As to quaternary structure, NDH-1 is composed of 14 different subunits. Subunits NuoA, H, J, K, L, M, N constitute the membrane sector of the complex. [4Fe-4S] cluster serves as cofactor.

It is found in the cell inner membrane. It catalyses the reaction a quinone + NADH + 5 H(+)(in) = a quinol + NAD(+) + 4 H(+)(out). In terms of biological role, NDH-1 shuttles electrons from NADH, via FMN and iron-sulfur (Fe-S) centers, to quinones in the respiratory chain. The immediate electron acceptor for the enzyme in this species is believed to be ubiquinone. Couples the redox reaction to proton translocation (for every two electrons transferred, four hydrogen ions are translocated across the cytoplasmic membrane), and thus conserves the redox energy in a proton gradient. The sequence is that of NADH-quinone oxidoreductase subunit I 1 from Rhodopseudomonas palustris (strain HaA2).